The chain runs to 73 residues: Translational regulator CsrA (73 aa).

It belongs to the CsrA/RsmA family. As to quaternary structure, homodimer; the beta-strands of each monomer intercalate to form a hydrophobic core, while the alpha-helices form wings that extend away from the core.

It localises to the cytoplasm. In terms of biological role, a translational regulator that binds mRNA to regulate translation initiation and/or mRNA stability. Usually binds in the 5'-UTR at or near the Shine-Dalgarno sequence preventing ribosome-binding, thus repressing translation. Its main target seems to be the major flagellin gene, while its function is anatagonized by FliW. The sequence is that of Translational regulator CsrA from Clostridium kluyveri (strain NBRC 12016).